The chain runs to 153 residues: D-aminoacyl-tRNA deacylase (153 aa).

The short motif at 142-143 is the Gly-cisPro motif, important for rejection of L-amino acids element; it reads GP.

It belongs to the DTD family. As to quaternary structure, homodimer.

The protein resides in the cytoplasm. The catalysed reaction is glycyl-tRNA(Ala) + H2O = tRNA(Ala) + glycine + H(+). It catalyses the reaction a D-aminoacyl-tRNA + H2O = a tRNA + a D-alpha-amino acid + H(+). In terms of biological role, an aminoacyl-tRNA editing enzyme that deacylates mischarged D-aminoacyl-tRNAs. Also deacylates mischarged glycyl-tRNA(Ala), protecting cells against glycine mischarging by AlaRS. Acts via tRNA-based rather than protein-based catalysis; rejects L-amino acids rather than detecting D-amino acids in the active site. By recycling D-aminoacyl-tRNA to D-amino acids and free tRNA molecules, this enzyme counteracts the toxicity associated with the formation of D-aminoacyl-tRNA entities in vivo and helps enforce protein L-homochirality. The protein is D-aminoacyl-tRNA deacylase of Acidovorax ebreus (strain TPSY) (Diaphorobacter sp. (strain TPSY)).